Here is a 90-residue protein sequence, read N- to C-terminus: Small ribosomal subunit protein uS15c (90 aa).

The protein belongs to the universal ribosomal protein uS15 family. As to quaternary structure, part of the 30S ribosomal subunit.

The protein resides in the plastid. Its subcellular location is the chloroplast. The protein is Small ribosomal subunit protein uS15c (rps15-A) of Ipomoea purpurea (Common morning glory).